The sequence spans 226 residues: Glyceraldehyde 3-phosphate phosphatase (226 aa).

This sequence belongs to the HAD-like hydrolase superfamily. The cofactor is Mg(2+).

Its function is as follows. Catalyzes the dephosphorylation of D,L-glyceraldehyde 3-phosphate in vitro. The protein is Glyceraldehyde 3-phosphate phosphatase of Methanothermobacter thermautotrophicus (strain ATCC 29096 / DSM 1053 / JCM 10044 / NBRC 100330 / Delta H) (Methanobacterium thermoautotrophicum).